The chain runs to 70 residues: Cold shock-like protein CspG (70 aa).

Positions 7 to 67 constitute a CSD domain; sequence GLVKWFNADK…GQRGPAAANV (61 aa).

It is found in the cytoplasm. This is Cold shock-like protein CspG (cspG) from Escherichia coli O157:H7.